The primary structure comprises 290 residues: Phosphoribosylaminoimidazole-succinocarboxamide synthase (290 aa).

The protein belongs to the SAICAR synthetase family.

It catalyses the reaction 5-amino-1-(5-phospho-D-ribosyl)imidazole-4-carboxylate + L-aspartate + ATP = (2S)-2-[5-amino-1-(5-phospho-beta-D-ribosyl)imidazole-4-carboxamido]succinate + ADP + phosphate + 2 H(+). It participates in purine metabolism; IMP biosynthesis via de novo pathway; 5-amino-1-(5-phospho-D-ribosyl)imidazole-4-carboxamide from 5-amino-1-(5-phospho-D-ribosyl)imidazole-4-carboxylate: step 1/2. This Haemophilus influenzae (strain PittEE) protein is Phosphoribosylaminoimidazole-succinocarboxamide synthase.